The following is a 70-amino-acid chain: uncharacterized protein (70 aa).

Its subcellular location is the plastid. The protein resides in the chloroplast. This is an uncharacterized protein from Mesostigma viride (Green alga).